Reading from the N-terminus, the 140-residue chain is Phosphoribosyl-AMP cyclohydrolase (140 aa).

D85 lines the Mg(2+) pocket. Zn(2+) is bound at residue C86. Mg(2+) contacts are provided by D87 and D89. C102 and C109 together coordinate Zn(2+).

It belongs to the PRA-CH family. In terms of assembly, homodimer. Mg(2+) serves as cofactor. Zn(2+) is required as a cofactor.

The protein resides in the cytoplasm. The enzyme catalyses 1-(5-phospho-beta-D-ribosyl)-5'-AMP + H2O = 1-(5-phospho-beta-D-ribosyl)-5-[(5-phospho-beta-D-ribosylamino)methylideneamino]imidazole-4-carboxamide. It functions in the pathway amino-acid biosynthesis; L-histidine biosynthesis; L-histidine from 5-phospho-alpha-D-ribose 1-diphosphate: step 3/9. Its function is as follows. Catalyzes the hydrolysis of the adenine ring of phosphoribosyl-AMP. This is Phosphoribosyl-AMP cyclohydrolase from Bradyrhizobium diazoefficiens (strain JCM 10833 / BCRC 13528 / IAM 13628 / NBRC 14792 / USDA 110).